A 110-amino-acid polypeptide reads, in one-letter code: Ribonuclease P protein component (110 aa).

The protein belongs to the RnpA family. As to quaternary structure, consists of a catalytic RNA component (M1 or rnpB) and a protein subunit.

It catalyses the reaction Endonucleolytic cleavage of RNA, removing 5'-extranucleotides from tRNA precursor.. In terms of biological role, RNaseP catalyzes the removal of the 5'-leader sequence from pre-tRNA to produce the mature 5'-terminus. It can also cleave other RNA substrates such as 4.5S RNA. The protein component plays an auxiliary but essential role in vivo by binding to the 5'-leader sequence and broadening the substrate specificity of the ribozyme. The chain is Ribonuclease P protein component from Mesorhizobium japonicum (strain LMG 29417 / CECT 9101 / MAFF 303099) (Mesorhizobium loti (strain MAFF 303099)).